Reading from the N-terminus, the 246-residue chain is E3 ubiquitin ligase TRIM40 (246 aa).

An RING-type zinc finger spans residues 12–55 (CPICLDPLKEAVSTDCRHLFCRMCLTQHMDKASVSGILSCPVCR). The B box-type zinc-finger motif lies at 64-105 (GDNYICHTHQKRVRRFCEASGHLLCEECLQSPEHQSHTELSI). Cys69, His72, Cys91, and His97 together coordinate Zn(2+). A coiled-coil region spans residues 105-170 (IENAISHYKE…DQTKEQLKAL (66 aa)).

It belongs to the TRIM/RBCC family. As to quaternary structure, interacts with NEDD8.

The catalysed reaction is S-ubiquitinyl-[E2 ubiquitin-conjugating enzyme]-L-cysteine + [acceptor protein]-L-lysine = [E2 ubiquitin-conjugating enzyme]-L-cysteine + N(6)-ubiquitinyl-[acceptor protein]-L-lysine.. E3 ubiquitin-protein ligase that plays a role in the limitation of the innate immune response. Mediates inhibition of the RLR signaling pathway by ubiquitinating RIGI and IFIH1 receptors, leading to their proteasomal degradation. Also promotes the neddylation of IKBKG/NEMO, stabilizing NFKBIA, and thereby inhibiting of NF-kappa-B nuclear translocation and activation. This is E3 ubiquitin ligase TRIM40 (Trim40) from Mus musculus (Mouse).